A 999-amino-acid chain; its full sequence is Signal peptide, CUB and EGF-like domain-containing protein 2 (999 aa).

Positions 1 to 31 (MGVAGRNRPGAAWAVLLLLLLLPPLLLLAGA) are cleaved as a signal peptide. The EGF-like 1; calcium-binding domain maps to 45–85 (DVDECAQGLDDCHADALCQNTPTSYKCSCKPGYQGEGRQCE). 6 disulfide bridges follow: C49–C62, C56–C71, C73–C84, C90–C102, C98–C111, and C113–C126. An EGF-like 2; calcium-binding domain is found at 86–127 (DIDECGNELNGGCVHDCLNIPGNYRCTCFDGFMLAHDGHNCL). Residues 128–168 (DVDECLENNGGCQHTCVNVMGSYECCCKEGFFLSDNQHTCI) enclose the EGF-like 3; calcium-binding domain. 3 EGF-like domains span residues 177 to 213 (CMNK…QRDC), 217 to 252 (CNHG…GRSC), and 286 to 321 (CAVN…GKTC). The 41-residue stretch at 323 to 363 (DIDECQTRNGGCDHFCKNIVGSFDCGCKKGFKLLTDEKSCQ) folds into the EGF-like 7; calcium-binding domain. Positions 364–402 (DVDECSLDRTCDHSCINHPGTFACACNRGYTLYGFTHCG) constitute an EGF-like 8; calcium-binding domain. Intrachain disulfides connect C368–C378, C374–C387, C389–C401, C407–C418, C414–C427, and C429–C442. One can recognise an EGF-like 9; calcium-binding domain in the interval 403-443 (DTNECSINNGGCQQVCVNTVGSYECQCHPGYKLHWNKKDCV). The N-linked (GlcNAc...) asparagine glycan is linked to N659. C809 and C835 are oxidised to a cystine. The region spanning 809-921 (CGGELGDFTG…RGFQVPYVTY (113 aa)) is the CUB domain. Residues 847–856 (ILIVVPEIFL) form an interaction with the cholesterol-anchor of SHH region. A disulfide bridge connects residues C862 and C883.

In terms of assembly, forms homooligomers. Forms heterooligomers with SCUBE1. Forms heterooligomers with SCUBE3. Interacts with SHH via the cholesterol anchor of the dually lipid-modified SHH (ShhNp). Interacts with PTCH1. Interacts with VEGFR2. In terms of processing, N-glycosylated. In terms of tissue distribution, expressed in a broad spectrum of adult tissues.

It localises to the secreted. Its subcellular location is the cell surface. Its function is as follows. Lipid-binding protein required for SHH long-range signaling by binding to the dually lipid-modified SHH (ShhNp) and by promoting ShhNp mobilization, solubilization and release from the cell membrane. Acts by enhancing the proteolytic processing (shedding) of the lipid-modified N- and C- terminal of ShhNp at the cell surface. Synergizes with DISP1 to increase SHH secretion. Probable cell surface coreceptor for VEGFR2 involved in VEGFR2-mediated angiogenesis. This Homo sapiens (Human) protein is Signal peptide, CUB and EGF-like domain-containing protein 2.